The primary structure comprises 89 residues: Dynein light chain 1, cytoplasmic (89 aa).

Position 36 is an N6-acetyllysine (Lys36). Lys43 participates in a covalent cross-link: Glycyl lysine isopeptide (Lys-Gly) (interchain with G-Cter in SUMO2). An interaction with ESR1 region spans residues 67–89 (THETKHFIYFYLGQVAILLFKSG). Phosphoserine is present on Ser88.

It belongs to the dynein light chain family. In terms of assembly, homodimer. Monomer; the monomeric form is incapable of binding to target proteins. The cytoplasmic dynein 1 complex consists of two catalytic heavy chains (HCs) and a number of non-catalytic subunits presented by intermediate chains (ICs), light intermediate chains (LICs) and light chains (LCs); the composition seems to vary in respect to the IC, LIC and LC composition. The heavy chain homodimer serves as a scaffold for the probable homodimeric assembly of the respective non-catalytic subunits. The ICs and LICs bind directly to the HC dimer and the LCs assemble on the IC dimer. Interacts with TXNDC17. Interacts with WWC1 and ESR1. The WWC1-DYNLL1 interaction is mandatory for the recruitment and transactivation functions of ESR1 or DYNLL1 to the target chromatin. Interacts with BCL2L11. Interacts with BCL2; the interaction is greatly enhanced in the nucleus and in mitochondria upon induction of apoptosis. Interacts with PAK1; the interaction requires dimeric DYNLL1. Interacts with MYZAP. Part of an astrin (SPAG5)-kinastrin (SKAP) complex containing KNSTRN, SPAG5, PLK1, DYNLL1 and SGO2. Interacts with ATMIN; this interaction inhibits ATMIN transcriptional activity and hence may play a role in a feedback loop whereby DYNLL1 inhibits transactivation of its own promoter by ATMIN. Interacts with NEK9 (not phosphorylated at 'Ser-944'). Interacts with BICD2. Interacts with BCAS1. Interacts with Basson/BSN. Interacts with HDAC6. Interacts with TPPP. Interacts with AMBRA1 (via TQT motifs); tethering AMBRA1 to the cytoskeleton. Interacts with FAM83D/CHICA (via C-terminus). Interacts with HMMR, SPAG5/Astrin and KNSTRN/Kinastrin. Interacts with TLK2. Interacts with NOS1. Interacts with WWC1, WWC2 and WWC3. Interacts with MRE11; inhibiting MRE11 homodimerization and activity. As to quaternary structure, (Microbial infection) Interacts with bovine immunodeficiency virus Gag protein; this interaction is critical for intracellular microtubule-dependent viral genome transport. Post-translationally, phosphorylation at Ser-88 promotes recruitment to DNA double-strand breaks (DSBs) by TP53BP1 and ability to inhibit MRE11.

The protein localises to the cytoplasm. The protein resides in the cytoskeleton. It localises to the microtubule organizing center. Its subcellular location is the centrosome. It is found in the chromosome. The protein localises to the nucleus. The protein resides in the mitochondrion. In terms of biological role, acts as one of several non-catalytic accessory components of the cytoplasmic dynein 1 complex that are thought to be involved in linking dynein to cargos and to adapter proteins that regulate dynein function. Cytoplasmic dynein 1 acts as a motor for the intracellular retrograde motility of vesicles and organelles along microtubules. May play a role in changing or maintaining the spatial distribution of cytoskeletal structures. In addition to its role in cytoskeleton and transport, acts as a protein-protein adapter, which inhibits and/or sequesters target proteins. Involved in the response to DNA damage by acting as a key regulator of DNA end resection: when phosphorylated at Ser-88, recruited to DNA double-strand breaks (DSBs) by TP53BP1 and acts by disrupting MRE11 dimerization, thereby inhibiting DNA end resection. In a subset of DSBs, DYNLL1 remains unphosphorylated and promotes the recruitment of the Shieldin complex. Binds and inhibits the catalytic activity of neuronal nitric oxide synthase/NOS1. Promotes transactivation functions of ESR1 and plays a role in the nuclear localization of ESR1. Regulates apoptotic activities of BCL2L11 by sequestering it to microtubules. Upon apoptotic stimuli the BCL2L11-DYNLL1 complex dissociates from cytoplasmic dynein and translocates to mitochondria and sequesters BCL2 thus neutralizing its antiapoptotic activity. This is Dynein light chain 1, cytoplasmic (DYNLL1) from Bos taurus (Bovine).